A 291-amino-acid chain; its full sequence is Homoserine kinase (291 aa).

Residue 80-90 (RPSSGLGSSAA) participates in ATP binding.

Belongs to the GHMP kinase family. Homoserine kinase subfamily.

The protein localises to the cytoplasm. It carries out the reaction L-homoserine + ATP = O-phospho-L-homoserine + ADP + H(+). It participates in amino-acid biosynthesis; L-threonine biosynthesis; L-threonine from L-aspartate: step 4/5. Functionally, catalyzes the ATP-dependent phosphorylation of L-homoserine to L-homoserine phosphate. In Haloquadratum walsbyi (strain DSM 16790 / HBSQ001), this protein is Homoserine kinase.